The primary structure comprises 704 residues: Protein cueball (704 aa).

The signal sequence occupies residues 1-26 (MKSPCRAAAGWLVLLLSSCCLGYVIA). Topologically, residues 27 to 594 (TEWAAAVTTD…TYCKESFNRT (568 aa)) are extracellular. 4 LDL-receptor class B repeats span residues 69-119 (GKLY…DHLE), 120-166 (RRLY…EATT), 199-242 (RHLY…DHYR), and 243-288 (NRLY…KNDY). N-linked (GlcNAc...) asparagine glycosylation is found at asparagine 152 and asparagine 219. EGF-like domains lie at 363 to 397 (TQQQ…KLCE), 432 to 478 (DRNR…ARCE), and 514 to 551 (EEYS…QRCE). 8 disulfide bridges follow: cysteine 372-cysteine 385, cysteine 387-cysteine 396, cysteine 436-cysteine 446, cysteine 440-cysteine 465, cysteine 467-cysteine 477, cysteine 518-cysteine 528, cysteine 522-cysteine 539, and cysteine 541-cysteine 550. Asparagine 375 is a glycosylation site (N-linked (GlcNAc...) asparagine). N-linked (GlcNAc...) asparagine glycosylation is present at asparagine 450. Residue asparagine 532 is glycosylated (N-linked (GlcNAc...) asparagine). An N-linked (GlcNAc...) asparagine glycan is attached at asparagine 592. Residues 595–615 (VVYTSLCFTVSFALLLAVVLV) form a helical membrane-spanning segment. The Cytoplasmic segment spans residues 616–704 (VSRMMKPPRP…NCGDGTAERK (89 aa)).

The protein belongs to the cueball family.

The protein resides in the cell membrane. Has a role in spermatogenesis and oogenesis. In Anopheles gambiae (African malaria mosquito), this protein is Protein cueball.